A 306-amino-acid polypeptide reads, in one-letter code: Elongation factor Ts (306 aa).

Positions 80-83 (TDFV) are involved in Mg(2+) ion dislocation from EF-Tu.

Belongs to the EF-Ts family.

Its subcellular location is the cytoplasm. Its function is as follows. Associates with the EF-Tu.GDP complex and induces the exchange of GDP to GTP. It remains bound to the aminoacyl-tRNA.EF-Tu.GTP complex up to the GTP hydrolysis stage on the ribosome. The chain is Elongation factor Ts from Methylorubrum extorquens (strain CM4 / NCIMB 13688) (Methylobacterium extorquens).